The primary structure comprises 428 residues: MKIYKLQTPVNAILENIAADKSISHRFAIFSLLTQEENKAQNYLLAQDTLNTLEIIKNLGAKIEQKDSCVKIIPPKEILSPNCILDCGNSGTAMRLMIGFLAGISGFFVLSGDKYLNNRPMRRISKPLTQIGARIYGRNEANLAPLCIEGQKLKAFNFKSEISSAQVKTAMILSAFRADNVCTFSEISLSRNHSENMLKAMKAPIRVSNDGLSLEINPLKKPLKAQNIIIPNDPSSAFYFVLAAIILPKSQIILKNILLNPTRIEAYKILQKMGAKLEMTITQNDFETIGEIRVESSKLNGIEVKDNIAWLIDEAPALAIAFALAKGKSSLINAKELRVKESDRIAVMVENLKLCGVEARELDDGFEIEGGCELKSSKIKSYGDHRIAMSFAILGLLCGIEIDDSDCIKTSFPNFIEILSNLGARIDY.

3-phosphoshikimate is bound by residues Lys21, Ser22, and Arg26. Phosphoenolpyruvate is bound at residue Lys21. Phosphoenolpyruvate contacts are provided by Gly91 and Arg119. 3-phosphoshikimate contacts are provided by Ser164, Gln166, Asp313, and Lys340. Position 166 (Gln166) interacts with phosphoenolpyruvate. Asp313 serves as the catalytic Proton acceptor. The phosphoenolpyruvate site is built by Arg344 and Arg386.

The protein belongs to the EPSP synthase family. As to quaternary structure, monomer.

The protein localises to the cytoplasm. It carries out the reaction 3-phosphoshikimate + phosphoenolpyruvate = 5-O-(1-carboxyvinyl)-3-phosphoshikimate + phosphate. Its pathway is metabolic intermediate biosynthesis; chorismate biosynthesis; chorismate from D-erythrose 4-phosphate and phosphoenolpyruvate: step 6/7. Functionally, catalyzes the transfer of the enolpyruvyl moiety of phosphoenolpyruvate (PEP) to the 5-hydroxyl of shikimate-3-phosphate (S3P) to produce enolpyruvyl shikimate-3-phosphate and inorganic phosphate. The polypeptide is 3-phosphoshikimate 1-carboxyvinyltransferase (Campylobacter jejuni subsp. jejuni serotype O:2 (strain ATCC 700819 / NCTC 11168)).